Here is a 284-residue protein sequence, read N- to C-terminus: Large ribosomal subunit protein uL2 (284 aa).

2 disordered regions span residues 28–50 (ELEG…FKKS) and 232–284 (RGTA…DRRK). Basic residues predominate over residues 36–46 (RSVRPNKKLSF). A compositionally biased stretch (basic and acidic residues) spans 240-250 (DHPHGGGEGRH). Basic residues predominate over residues 264–284 (KGLKTRDKRKSNKWIVKDRRK).

It belongs to the universal ribosomal protein uL2 family. As to quaternary structure, part of the 50S ribosomal subunit. Forms a bridge to the 30S subunit in the 70S ribosome.

One of the primary rRNA binding proteins. Required for association of the 30S and 50S subunits to form the 70S ribosome, for tRNA binding and peptide bond formation. It has been suggested to have peptidyltransferase activity; this is somewhat controversial. Makes several contacts with the 16S rRNA in the 70S ribosome. In Chlamydia muridarum (strain MoPn / Nigg), this protein is Large ribosomal subunit protein uL2.